The sequence spans 394 residues: Phosphopentomutase (394 aa).

Positions 15, 288, 293, 329, 330, and 341 each coordinate Mn(2+).

This sequence belongs to the phosphopentomutase family. Mn(2+) serves as cofactor.

It is found in the cytoplasm. The enzyme catalyses 2-deoxy-alpha-D-ribose 1-phosphate = 2-deoxy-D-ribose 5-phosphate. It carries out the reaction alpha-D-ribose 1-phosphate = D-ribose 5-phosphate. Its pathway is carbohydrate degradation; 2-deoxy-D-ribose 1-phosphate degradation; D-glyceraldehyde 3-phosphate and acetaldehyde from 2-deoxy-alpha-D-ribose 1-phosphate: step 1/2. Its function is as follows. Isomerase that catalyzes the conversion of deoxy-ribose 1-phosphate (dRib-1-P) and ribose 1-phosphate (Rib-1-P) to deoxy-ribose 5-phosphate (dRib-5-P) and ribose 5-phosphate (Rib-5-P), respectively. In Bacillus pumilus (strain SAFR-032), this protein is Phosphopentomutase.